We begin with the raw amino-acid sequence, 393 residues long: NAD(P)H-quinone oxidoreductase subunit H, chloroplastic (393 aa).

The protein belongs to the complex I 49 kDa subunit family. In terms of assembly, NDH is composed of at least 16 different subunits, 5 of which are encoded in the nucleus.

Its subcellular location is the plastid. The protein localises to the chloroplast thylakoid membrane. The catalysed reaction is a plastoquinone + NADH + (n+1) H(+)(in) = a plastoquinol + NAD(+) + n H(+)(out). The enzyme catalyses a plastoquinone + NADPH + (n+1) H(+)(in) = a plastoquinol + NADP(+) + n H(+)(out). NDH shuttles electrons from NAD(P)H:plastoquinone, via FMN and iron-sulfur (Fe-S) centers, to quinones in the photosynthetic chain and possibly in a chloroplast respiratory chain. The immediate electron acceptor for the enzyme in this species is believed to be plastoquinone. Couples the redox reaction to proton translocation, and thus conserves the redox energy in a proton gradient. The chain is NAD(P)H-quinone oxidoreductase subunit H, chloroplastic from Zea mays (Maize).